The sequence spans 254 residues: Alcohol dehydrogenase 2 (254 aa).

10–33 (FVAGLGGIGLDTSREIVKSGPKNL) serves as a coordination point for NAD(+). Ser-138 lines the substrate pocket. Tyr-151 functions as the Proton acceptor in the catalytic mechanism.

It belongs to the short-chain dehydrogenases/reductases (SDR) family. In terms of assembly, homodimer.

The enzyme catalyses a primary alcohol + NAD(+) = an aldehyde + NADH + H(+). The catalysed reaction is a secondary alcohol + NAD(+) = a ketone + NADH + H(+). In Drosophila hydei (Fruit fly), this protein is Alcohol dehydrogenase 2 (Adh2).